The chain runs to 260 residues: Scytalidopepsin B (260 aa).

Residues 1-20 form the signal peptide; it reads MKFTTAAVLSALVSAEIAFA. Positions 21-54 are excised as a propeptide; sequence APGGNGFARRQARRQARAAGLKASPFRQVNAKEA. Cysteines 101 and 181 form a disulfide. Glutamate 190 (proton acceptor) is an active-site residue. 2 disulfide bridges follow: cysteine 195/cysteine 219 and cysteine 248/cysteine 257.

The protein belongs to the peptidase G1 family. Monomer.

It catalyses the reaction Hydrolysis of proteins with broad specificity, cleaving 24-Phe-|-Phe-25, but not 15-Leu-|-Tyr-16 and 25-Phe-|-Tyr-26 in the B chain of insulin.. The polypeptide is Scytalidopepsin B (Scytalidium lignicola (Hyphomycete)).